Here is a 144-residue protein sequence, read N- to C-terminus: uncharacterized protein (144 aa).

Helical transmembrane passes span 27–47, 49–69, 83–103, and 106–126; these read VVCA…IPDI, LLPI…LLAL, IVLL…DATV, and ALDM…ILNV.

It is found in the membrane. This is an uncharacterized protein from Saccharomyces cerevisiae (strain ATCC 204508 / S288c) (Baker's yeast).